Here is a 216-residue protein sequence, read N- to C-terminus: Probable GTP-binding protein EngB (216 aa).

The region spanning 26 to 200 (EGIEIAFAGR…RAKLDTWFAP (175 aa)) is the EngB-type G domain. GTP-binding positions include 34–41 (GRSNAGKS), 61–65 (GRTQL), 79–82 (DLPG), 146–149 (TKAD), and 179–181 (YSS). 2 residues coordinate Mg(2+): Ser-41 and Thr-63.

It belongs to the TRAFAC class TrmE-Era-EngA-EngB-Septin-like GTPase superfamily. EngB GTPase family. Requires Mg(2+) as cofactor.

Its function is as follows. Necessary for normal cell division and for the maintenance of normal septation. This Vibrio vulnificus (strain CMCP6) protein is Probable GTP-binding protein EngB.